The following is a 487-amino-acid chain: Aspartyl/glutamyl-tRNA(Asn/Gln) amidotransferase subunit B (487 aa).

The protein belongs to the GatB/GatE family. GatB subfamily. In terms of assembly, heterotrimer of A, B and C subunits.

It carries out the reaction L-glutamyl-tRNA(Gln) + L-glutamine + ATP + H2O = L-glutaminyl-tRNA(Gln) + L-glutamate + ADP + phosphate + H(+). The catalysed reaction is L-aspartyl-tRNA(Asn) + L-glutamine + ATP + H2O = L-asparaginyl-tRNA(Asn) + L-glutamate + ADP + phosphate + 2 H(+). Allows the formation of correctly charged Asn-tRNA(Asn) or Gln-tRNA(Gln) through the transamidation of misacylated Asp-tRNA(Asn) or Glu-tRNA(Gln) in organisms which lack either or both of asparaginyl-tRNA or glutaminyl-tRNA synthetases. The reaction takes place in the presence of glutamine and ATP through an activated phospho-Asp-tRNA(Asn) or phospho-Glu-tRNA(Gln). The sequence is that of Aspartyl/glutamyl-tRNA(Asn/Gln) amidotransferase subunit B from Chlamydia abortus (strain DSM 27085 / S26/3) (Chlamydophila abortus).